A 122-amino-acid chain; its full sequence is Small ribosomal subunit protein uS13 (122 aa).

The tract at residues 97 to 122 (PVRGQRTRTNARTRKGPRKTVAKKKK) is disordered. Over residues 101–122 (QRTRTNARTRKGPRKTVAKKKK) the composition is skewed to basic residues.

It belongs to the universal ribosomal protein uS13 family. As to quaternary structure, part of the 30S ribosomal subunit. Forms a loose heterodimer with protein S19. Forms two bridges to the 50S subunit in the 70S ribosome.

Functionally, located at the top of the head of the 30S subunit, it contacts several helices of the 16S rRNA. In the 70S ribosome it contacts the 23S rRNA (bridge B1a) and protein L5 of the 50S subunit (bridge B1b), connecting the 2 subunits; these bridges are implicated in subunit movement. Contacts the tRNAs in the A and P-sites. This Caldanaerobacter subterraneus subsp. tengcongensis (strain DSM 15242 / JCM 11007 / NBRC 100824 / MB4) (Thermoanaerobacter tengcongensis) protein is Small ribosomal subunit protein uS13.